A 490-amino-acid polypeptide reads, in one-letter code: N-succinylglutamate 5-semialdehyde dehydrogenase (490 aa).

Residue 223–228 coordinates NAD(+); sequence GSAGTG. Active-site residues include glutamate 246 and cysteine 280.

It belongs to the aldehyde dehydrogenase family. AstD subfamily.

The catalysed reaction is N-succinyl-L-glutamate 5-semialdehyde + NAD(+) + H2O = N-succinyl-L-glutamate + NADH + 2 H(+). It functions in the pathway amino-acid degradation; L-arginine degradation via AST pathway; L-glutamate and succinate from L-arginine: step 4/5. In terms of biological role, catalyzes the NAD-dependent reduction of succinylglutamate semialdehyde into succinylglutamate. The sequence is that of N-succinylglutamate 5-semialdehyde dehydrogenase from Serratia proteamaculans (strain 568).